Here is a 385-residue protein sequence, read N- to C-terminus: Heterogeneous nuclear ribonucleoprotein 87F (385 aa).

2 RRM domains span residues 24–101 (RKLF…RAVP) and 115–192 (KKLF…KAIA). Disordered regions lie at residues 192 to 289 (AKQD…WNGG) and 305 to 385 (GNGG…NRRY). 2 stretches are compositionally biased toward gly residues: residues 199–289 (QGGG…WNGG) and 305–317 (GNGGGGGGGGGFG). The span at 319–336 (EYQQSYGGGPQRNSNFGN) shows a compositional bias: polar residues. Gly residues-rich tracts occupy residues 344–362 (QGGGGGGFNKGNQGGGQGF) and 369–385 (TGGGGQGGNMGGGNRRY).

The protein localises to the nucleus. It is found in the cytoplasm. Its function is as follows. This protein is a component of ribonucleosomes. Could be needed to organize a concentration gradient of a dorsalizing morphogen (Dm) originating in the germinal vesicle. The polypeptide is Heterogeneous nuclear ribonucleoprotein 87F (Hrb87F) (Drosophila melanogaster (Fruit fly)).